The sequence spans 420 residues: 3-phosphoshikimate 1-carboxyvinyltransferase (420 aa).

The segment at 1-24 (MTRTAKLTIIPPGRPLSGRAMPPG) is disordered. 3-phosphoshikimate contacts are provided by K26, S27, and R31. K26 is a phosphoenolpyruvate binding site. The phosphoenolpyruvate site is built by G97 and R125. The 3-phosphoshikimate site is built by S170, S171, Q172, D297, N320, and K324. A phosphoenolpyruvate-binding site is contributed by Q172. The active-site Proton acceptor is the D297. Residues R328, R375, and K400 each coordinate phosphoenolpyruvate.

It belongs to the EPSP synthase family. As to quaternary structure, monomer.

The protein resides in the cytoplasm. It carries out the reaction 3-phosphoshikimate + phosphoenolpyruvate = 5-O-(1-carboxyvinyl)-3-phosphoshikimate + phosphate. Its pathway is metabolic intermediate biosynthesis; chorismate biosynthesis; chorismate from D-erythrose 4-phosphate and phosphoenolpyruvate: step 6/7. Functionally, catalyzes the transfer of the enolpyruvyl moiety of phosphoenolpyruvate (PEP) to the 5-hydroxyl of shikimate-3-phosphate (S3P) to produce enolpyruvyl shikimate-3-phosphate and inorganic phosphate. This is 3-phosphoshikimate 1-carboxyvinyltransferase from Rhizobium etli (strain CIAT 652).